A 508-amino-acid chain; its full sequence is Photosystem II CP47 reaction center protein (508 aa).

6 helical membrane-spanning segments follow: residues 21–36, 101–115, 140–156, 203–218, 237–252, and 457–472; these read AVHIMHTALVAGWAGS, IVFSGLCFLAAIWHW, GIHLFLSGVACFGFGTF, IAAGTLGILAGLFHLS, VLSSSIAAVFFAAFVV, and SFALLFFFGHIWHGAR.

This sequence belongs to the PsbB/PsbC family. PsbB subfamily. As to quaternary structure, PSII is composed of 1 copy each of membrane proteins PsbA, PsbB, PsbC, PsbD, PsbE, PsbF, PsbH, PsbI, PsbJ, PsbK, PsbL, PsbM, PsbT, PsbX, PsbY, PsbZ, Psb30/Ycf12, at least 3 peripheral proteins of the oxygen-evolving complex and a large number of cofactors. It forms dimeric complexes. Binds multiple chlorophylls. PSII binds additional chlorophylls, carotenoids and specific lipids. is required as a cofactor.

The protein localises to the plastid. Its subcellular location is the chloroplast thylakoid membrane. Functionally, one of the components of the core complex of photosystem II (PSII). It binds chlorophyll and helps catalyze the primary light-induced photochemical processes of PSII. PSII is a light-driven water:plastoquinone oxidoreductase, using light energy to abstract electrons from H(2)O, generating O(2) and a proton gradient subsequently used for ATP formation. The sequence is that of Photosystem II CP47 reaction center protein from Citrus sinensis (Sweet orange).